The sequence spans 530 residues: DNA damage-binding protein cmr1 (530 aa).

Disordered regions lie at residues 34–115 (VGLF…RKSD) and 224–250 (TKPV…LTTL). Residues 52-62 (AKKKKPAPKKV) are compositionally biased toward basic residues. Over residues 89–108 (EVAKRKADEHDAALQEAERA) the composition is skewed to basic and acidic residues. The stretch at 188 to 229 (LTPERIYAMTFHPSESKPLIFAGDKMGHLGVLDASQTKPVSA) is one WD 1 repeat. Over residues 233-244 (DEDEEDDDDDPD) the composition is skewed to acidic residues. WD repeat units follow at residues 252 to 292 (PHTR…SVER), 302 to 339 (VPIS…QDSA), 344 to 384 (LSDK…HKSP), 389 to 430 (EHES…ASWK), 453 to 496 (GRWV…LAQL), and 499 to 530 (DGIT…CLWM).

It belongs to the WD repeat DDB2/WDR76 family.

Its function is as follows. DNA-binding protein that binds to both single- and double-stranded DNA. Binds preferentially to UV-damaged DNA. May be involved in DNA-metabolic processes. This is DNA damage-binding protein cmr1 from Aspergillus terreus (strain NIH 2624 / FGSC A1156).